Consider the following 376-residue polypeptide: 5-amino-6-(D-ribitylamino)uracil--L-tyrosine 4-hydroxyphenyl transferase 1 (376 aa).

The region spanning 50 to 275 (VTYVVNRNIN…PGLEDLKVYA (226 aa)) is the Radical SAM core domain. [4Fe-4S] cluster contacts are provided by C64, C68, and C71.

The protein belongs to the radical SAM superfamily. CofH family. As to quaternary structure, consists of two subunits, CofG and CofH. [4Fe-4S] cluster is required as a cofactor.

The enzyme catalyses 5-amino-6-(D-ribitylamino)uracil + L-tyrosine + S-adenosyl-L-methionine = 5-amino-5-(4-hydroxybenzyl)-6-(D-ribitylimino)-5,6-dihydrouracil + 2-iminoacetate + 5'-deoxyadenosine + L-methionine + H(+). The protein operates within cofactor biosynthesis; coenzyme F0 biosynthesis. In terms of biological role, catalyzes the radical-mediated synthesis of 5-amino-5-(4-hydroxybenzyl)-6-(D-ribitylimino)-5,6-dihydrouracil from 5-amino-6-(D-ribitylamino)uracil and L-tyrosine. The chain is 5-amino-6-(D-ribitylamino)uracil--L-tyrosine 4-hydroxyphenyl transferase 1 from Methanosarcina mazei (strain ATCC BAA-159 / DSM 3647 / Goe1 / Go1 / JCM 11833 / OCM 88) (Methanosarcina frisia).